The primary structure comprises 251 residues: Imidazole glycerol phosphate synthase subunit HisF (251 aa).

Residues D11 and D130 contribute to the active site.

The protein belongs to the HisA/HisF family. Heterodimer of HisH and HisF.

Its subcellular location is the cytoplasm. The enzyme catalyses 5-[(5-phospho-1-deoxy-D-ribulos-1-ylimino)methylamino]-1-(5-phospho-beta-D-ribosyl)imidazole-4-carboxamide + L-glutamine = D-erythro-1-(imidazol-4-yl)glycerol 3-phosphate + 5-amino-1-(5-phospho-beta-D-ribosyl)imidazole-4-carboxamide + L-glutamate + H(+). The protein operates within amino-acid biosynthesis; L-histidine biosynthesis; L-histidine from 5-phospho-alpha-D-ribose 1-diphosphate: step 5/9. Functionally, IGPS catalyzes the conversion of PRFAR and glutamine to IGP, AICAR and glutamate. The HisF subunit catalyzes the cyclization activity that produces IGP and AICAR from PRFAR using the ammonia provided by the HisH subunit. The polypeptide is Imidazole glycerol phosphate synthase subunit HisF (Chlorobium limicola (strain DSM 245 / NBRC 103803 / 6330)).